Consider the following 478-residue polypeptide: MKSTVEKLSPTRVRINVEVPFTELEPDFDRAFKELAKQVRLPGFRPGKAPRKLLEARVGREAMLDQVVGEAVPGRYTEAVTSSDVQPLGQPEIEITKKEYGEDLVFTAEVDVRPEITLPDLSALEITVDPIEITDEEVDTELQSLRARFGTLTGVDRPAKDGDFVSIDLSATVDGKDVPEATTEGLSHEVGSGQLIEGLDDAIVGLSEGESKEFTTTLAAGEHAGKEAIVTVTVKSIKERELPEPDDEFAQLASEFDTIDELKESLTEQVRRVKRVQQAEQIRDKALELLLEQTEVPLPEKIVQAQIDDTVHNAIHGLDHDEDRFAEQLAEQGSSREEFDANTRTEAEKAVKTQLLMDALADQLEVQVGQGDLTERLVLMSRQYGLEPQQLLQILQQNNQLPAMFADVRRGLTIAAVVHGATVKDTDGNDIDTTEFFGPSGGAQAEAEGADEADADSDADSDTEADSDTEADEADEAK.

Residues 162–243 (GDFVSIDLSA…VKSIKERELP (82 aa)) enclose the PPIase FKBP-type domain. Residues 424-478 (KDTDGNDIDTTEFFGPSGGAQAEAEGADEADADSDADSDTEADSDTEADEADEAK) are disordered. A compositionally biased stretch (acidic residues) spans 448–478 (EGADEADADSDADSDTEADSDTEADEADEAK).

This sequence belongs to the FKBP-type PPIase family. Tig subfamily.

It is found in the cytoplasm. The enzyme catalyses [protein]-peptidylproline (omega=180) = [protein]-peptidylproline (omega=0). Involved in protein export. Acts as a chaperone by maintaining the newly synthesized protein in an open conformation. Functions as a peptidyl-prolyl cis-trans isomerase. This Mycobacterium sp. (strain KMS) protein is Trigger factor.